The following is a 230-amino-acid chain: CRP-like protein Clp (230 aa).

Pro-18–Val-139 contributes to the a nucleoside 3',5'-cyclic phosphate binding site. Positions Leu-158–Arg-230 constitute an HTH crp-type domain. The segment at residues Arg-190–Lys-209 is a DNA-binding region (H-T-H motif).

Homodimer.

Its subcellular location is the cytoplasm. Allosterically inhibited by cyclic di-GMP (c-di-GMP), which binds to Clp and abolishes its ability to bind its target gene promoter. In terms of biological role, global transcriptional regulator that regulates virulence factors production by activating or repressing the expression of a large set of genes in diffusible signal factor (DSF) pathway. This chain is CRP-like protein Clp (clp), found in Xanthomonas campestris pv. campestris (strain 8004).